An 896-amino-acid polypeptide reads, in one-letter code: UPF0182 protein GM21_2279 (896 aa).

Helical transmembrane passes span Met6–Phe26, Val46–Leu66, Leu99–Gly119, Leu158–Val180, Leu201–Phe221, Thr245–Trp265, and Leu271–Pro291.

It belongs to the UPF0182 family.

The protein resides in the cell membrane. This Geobacter sp. (strain M21) protein is UPF0182 protein GM21_2279.